Here is a 262-residue protein sequence, read N- to C-terminus: Tryptophan synthase alpha chain (262 aa).

Residues glutamate 49 and aspartate 60 each act as proton acceptor in the active site.

It belongs to the TrpA family. Tetramer of two alpha and two beta chains.

The catalysed reaction is (1S,2R)-1-C-(indol-3-yl)glycerol 3-phosphate + L-serine = D-glyceraldehyde 3-phosphate + L-tryptophan + H2O. Its pathway is amino-acid biosynthesis; L-tryptophan biosynthesis; L-tryptophan from chorismate: step 5/5. In terms of biological role, the alpha subunit is responsible for the aldol cleavage of indoleglycerol phosphate to indole and glyceraldehyde 3-phosphate. This is Tryptophan synthase alpha chain from Thermoanaerobacter pseudethanolicus (strain ATCC 33223 / 39E) (Clostridium thermohydrosulfuricum).